Reading from the N-terminus, the 81-residue chain is Photosystem I iron-sulfur center (81 aa).

4Fe-4S ferredoxin-type domains lie at 2-31 and 39-68; these read SHSV…MIPW and IASA…VRVS. [4Fe-4S] cluster-binding residues include C11, C14, C17, C21, C48, C51, C54, and C58.

The eukaryotic PSI reaction center is composed of at least 11 subunits. [4Fe-4S] cluster is required as a cofactor.

Its subcellular location is the plastid. The protein resides in the chloroplast thylakoid membrane. It catalyses the reaction reduced [plastocyanin] + hnu + oxidized [2Fe-2S]-[ferredoxin] = oxidized [plastocyanin] + reduced [2Fe-2S]-[ferredoxin]. In terms of biological role, apoprotein for the two 4Fe-4S centers FA and FB of photosystem I (PSI); essential for photochemical activity. FB is the terminal electron acceptor of PSI, donating electrons to ferredoxin. The C-terminus interacts with PsaA/B/D and helps assemble the protein into the PSI complex. Required for binding of PsaD and PsaE to PSI. PSI is a plastocyanin-ferredoxin oxidoreductase, converting photonic excitation into a charge separation, which transfers an electron from the donor P700 chlorophyll pair to the spectroscopically characterized acceptors A0, A1, FX, FA and FB in turn. The polypeptide is Photosystem I iron-sulfur center (Daucus carota (Wild carrot)).